Here is a 439-residue protein sequence, read N- to C-terminus: tRNA(Ile)-lysidine synthase (439 aa).

23 to 28 (SGGLDS) is an ATP binding site.

This sequence belongs to the tRNA(Ile)-lysidine synthase family.

The protein resides in the cytoplasm. It catalyses the reaction cytidine(34) in tRNA(Ile2) + L-lysine + ATP = lysidine(34) in tRNA(Ile2) + AMP + diphosphate + H(+). Its function is as follows. Ligates lysine onto the cytidine present at position 34 of the AUA codon-specific tRNA(Ile) that contains the anticodon CAU, in an ATP-dependent manner. Cytidine is converted to lysidine, thus changing the amino acid specificity of the tRNA from methionine to isoleucine. In Methylococcus capsulatus (strain ATCC 33009 / NCIMB 11132 / Bath), this protein is tRNA(Ile)-lysidine synthase.